A 289-amino-acid chain; its full sequence is MSTMNMPNVLNYQYNDNNIMNNSEYWTLVNILSTPMTPEVRKIVLDKLTSINNNLLMENKTNIQSNNFFGPNFDHVSRSPLNESRTSFKNIPQSRNLPRDYVRDSSKNISKDFTRESIKNHDKEFERDYLERDNLPRENFRNDTDIPKDPLRDRMRESLRDSSRNILRSGVLNSRKKDFEENLHPSFNSLDSLNHGHRNPIPISNPISSKTSNTQFPKKIVYNPNIFDNLSDDSEEIDLDTVSDSVINNNFNRHSDNSSILDEKLNRIRNLQNKLLSVRSKKISSVRNH.

Residues 80–96 are compositionally biased toward polar residues; the sequence is PLNESRTSFKNIPQSRN. 2 disordered regions span residues 80–101 and 136–157; these read PLNESRTSFKNIPQSRNLPRDY and PRENFRNDTDIPKDPLRDRMRE.

This is an uncharacterized protein from Acanthamoeba polyphaga (Amoeba).